The sequence spans 143 residues: Nucleoside diphosphate kinase (143 aa).

ATP is bound by residues K11, F59, R87, T93, R104, and N114. Catalysis depends on H117, which acts as the Pros-phosphohistidine intermediate.

Belongs to the NDK family. As to quaternary structure, homotetramer. Requires Mg(2+) as cofactor.

It localises to the cytoplasm. The enzyme catalyses a 2'-deoxyribonucleoside 5'-diphosphate + ATP = a 2'-deoxyribonucleoside 5'-triphosphate + ADP. It catalyses the reaction a ribonucleoside 5'-diphosphate + ATP = a ribonucleoside 5'-triphosphate + ADP. In terms of biological role, major role in the synthesis of nucleoside triphosphates other than ATP. The ATP gamma phosphate is transferred to the NDP beta phosphate via a ping-pong mechanism, using a phosphorylated active-site intermediate. This Tolumonas auensis (strain DSM 9187 / NBRC 110442 / TA 4) protein is Nucleoside diphosphate kinase.